Reading from the N-terminus, the 612-residue chain is UvrABC system protein C (612 aa).

A GIY-YIG domain is found at 20-98; the sequence is THSGVYRMLD…IKQHRPKYNI (79 aa). The region spanning 208 to 243 is the UVR domain; the sequence is SSVLEEISAKMYQASEDMEYEKAQVYRDQLVVLRKL.

Belongs to the UvrC family. As to quaternary structure, interacts with UvrB in an incision complex.

It localises to the cytoplasm. In terms of biological role, the UvrABC repair system catalyzes the recognition and processing of DNA lesions. UvrC both incises the 5' and 3' sides of the lesion. The N-terminal half is responsible for the 3' incision and the C-terminal half is responsible for the 5' incision. In Francisella tularensis subsp. tularensis (strain WY96-3418), this protein is UvrABC system protein C.